The sequence spans 854 residues: A-kinase anchor protein 4 (854 aa).

Positions 1 to 188 (MMAYSDTTMM…MTAAKNTNNN (188 aa)) are excised as a propeptide. Phosphoserine is present on residues Ser-96, Ser-130, Ser-190, Ser-213, Ser-226, and Ser-272. The segment at 184–207 (NTNNNQSPSAPPAKPPSTQRAVIS) is disordered. Positions 219–232 (FYVNRLSSLVIQMA) are PKA-RI and PKA-RII subunit binding domain. The interval 287 to 323 (RGTGEESREGGQKSFLYSELSNKSKSGDKQMSQRESK) is disordered. Basic and acidic residues predominate over residues 288-297 (GTGEESREGG). At Ser-300 the chain carries Phosphoserine. Tyr-303 is subject to Phosphotyrosine. Ser-304 and Ser-307 each carry phosphoserine. Basic and acidic residues predominate over residues 311–323 (KSGDKQMSQRESK). Positions 336–345 (YANQVASDMM) are PKA-RI-alpha subunit binding domain. A phosphoserine mark is found at Ser-342, Ser-432, Ser-443, Ser-445, Ser-447, Ser-450, Ser-464, and Ser-492. Phosphothreonine is present on Thr-506. Phosphoserine occurs at positions 536, 581, 627, and 703.

The protein belongs to the AKAP110 family. In terms of assembly, interacts with PRKAR1A and PRKAR2A. Interacts with ENO4. Interacts with QRICH2. Phosphorylated by STK33 during sperm flagella assembly. Testis specific; only expressed in round spermatids.

Its subcellular location is the cell projection. The protein localises to the cilium. It is found in the flagellum. In terms of biological role, major structural component of sperm fibrous sheath. Plays a role in sperm motility. The polypeptide is A-kinase anchor protein 4 (Homo sapiens (Human)).